Consider the following 538-residue polypeptide: Lipid scramblase CLPTM1L (538 aa).

Topologically, residues methionine 1–serine 10 are cytoplasmic. Residues leucine 11–valine 31 form a helical membrane-spanning segment. Residues tyrosine 32 to leucine 284 are Extracellular-facing. Asparagine 91, asparagine 101, and asparagine 229 each carry an N-linked (GlcNAc...) asparagine glycan. A helical transmembrane segment spans residues tyrosine 285–phenylalanine 305. Over lysine 306–lysine 324 the chain is Cytoplasmic. Residues alanine 325–aspartate 342 traverse the membrane as a helical segment. The Extracellular segment spans residues glutamate 343–serine 346. The helical transmembrane segment at leucine 347–valine 364 threads the bilayer. Over lysine 365–lysine 402 the chain is Cytoplasmic. A helical membrane pass occupies residues tyrosine 403 to isoleucine 423. Residues lysine 424–tryptophan 428 are Extracellular-facing. A helical membrane pass occupies residues tyrosine 429–leucine 449. Over proline 450–aspartate 538 the chain is Cytoplasmic.

It belongs to the CLPTM1 family. In terms of tissue distribution, ubiquitously expressed.

The protein resides in the endoplasmic reticulum membrane. The catalysed reaction is a 6-(alpha-D-glucosaminyl)-1-(1,2-diacyl-sn-glycero-3-phospho)-1D-myo-inositol(in) = a 6-(alpha-D-glucosaminyl)-1-(1,2-diacyl-sn-glycero-3-phospho)-1D-myo-inositol(out). The enzyme catalyses 6-(alpha-D-glucosaminyl)-(1-octadecanoyl,2-(9Z)-octadecenoyl-sn-glycero-3-phospho)-1D-myo-inositol(in) = 6-(alpha-D-glucosaminyl)-(1-octadecanoyl,2-(9Z)-octadecenoyl-sn-glycero-3-phospho)-1D-myo-inositol(out). It carries out the reaction a 1,2-diacyl-sn-glycero-3-phospho-(1D-myo-inositol)(in) = a 1,2-diacyl-sn-glycero-3-phospho-(1D-myo-inositol)(out). It catalyses the reaction a 1,2-diacyl-sn-glycero-3-phosphocholine(in) = a 1,2-diacyl-sn-glycero-3-phosphocholine(out). The catalysed reaction is a 1,2-diacyl-sn-glycero-3-phosphoethanolamine(in) = a 1,2-diacyl-sn-glycero-3-phosphoethanolamine(out). In terms of biological role, scramblase that mediates the translocation of glucosaminylphosphatidylinositol (alpha-D-GlcN-(1-6)-(1,2-diacyl-sn-glycero-3-phospho)-1D-myo-inositol, GlcN-PI) across the endoplasmic reticulum (ER) membrane, from the cytosolic leaflet to the luminal leaflet of the ER membrane, where it participates in the biosynthesis of glycosylphosphatidylinositol (GPI). GPI is a lipid glycoconjugate involved in post-translational modification of proteins. Can also translocate 1,2-diacyl-sn-glycero-3-phospho-(1D-myo-inositol) (phosphatidylinositol or PI), as well as several other phospholipids (1,2-diacyl-sn-glycero-3-phosphocholine, 1,2-diacyl-sn-glycero-3-phosphoethanolamine), and N-acetylglucosaminylphosphatidylinositol (GlcNAc-PI) in vitro. The protein is Lipid scramblase CLPTM1L (CLPTM1L) of Homo sapiens (Human).